A 560-amino-acid polypeptide reads, in one-letter code: ATP synthase subunit beta, mitochondrial (560 aa).

The N-terminal 54 residues, 1 to 54 (MASRRLLASLLRQSAQRGGGLISRSLGNSIPKSASRASSRASPKGFLLNRAVQY), are a transit peptide targeting the mitochondrion. 2 disordered regions span residues 20-44 (GLIS…ASPK) and 58-81 (AAAP…KITD). Low complexity-rich tracts occupy residues 33–42 (SASRASSRAS) and 58–71 (AAAP…PPKS). Residue 235-242 (GGAGVGKT) participates in ATP binding.

The protein belongs to the ATPase alpha/beta chains family. F-type ATPases have 2 components, CF(1) - the catalytic core - and CF(0) - the membrane proton channel. CF(1) has five subunits: alpha(3), beta(3), gamma(1), delta(1), epsilon(1). CF(0) has three main subunits: a, b and c.

The protein localises to the mitochondrion. It localises to the mitochondrion inner membrane. The enzyme catalyses ATP + H2O + 4 H(+)(in) = ADP + phosphate + 5 H(+)(out). Functionally, mitochondrial membrane ATP synthase (F(1)F(0) ATP synthase or Complex V) produces ATP from ADP in the presence of a proton gradient across the membrane which is generated by electron transport complexes of the respiratory chain. F-type ATPases consist of two structural domains, F(1) - containing the extramembraneous catalytic core, and F(0) - containing the membrane proton channel, linked together by a central stalk and a peripheral stalk. During catalysis, ATP synthesis in the catalytic domain of F(1) is coupled via a rotary mechanism of the central stalk subunits to proton translocation. Subunits alpha and beta form the catalytic core in F(1). Rotation of the central stalk against the surrounding alpha(3)beta(3) subunits leads to hydrolysis of ATP in three separate catalytic sites on the beta subunits. The sequence is that of ATP synthase subunit beta, mitochondrial (ATPB) from Nicotiana plumbaginifolia (Leadwort-leaved tobacco).